The primary structure comprises 309 residues: Uricase (309 aa).

An N-acetylalanine modification is found at A2. Active-site charge relay system residues include K16 and T63. Residues T63, D64, F165, R182, V237, Q238, and N264 each contribute to the urate site. H266 functions as the Charge relay system in the catalytic mechanism. Positions 307–309 (SKL) match the Microbody targeting signal motif.

The protein belongs to the uricase family.

It localises to the peroxisome. It carries out the reaction urate + O2 + H2O = 5-hydroxyisourate + H2O2. Its pathway is purine metabolism; urate degradation; (S)-allantoin from urate: step 1/3. In terms of biological role, catalyzes the oxidation of uric acid to 5-hydroxyisourate, which is further processed to form (S)-allantoin. This chain is Uricase, found in Arabidopsis thaliana (Mouse-ear cress).